A 210-amino-acid chain; its full sequence is 3-hexulose-6-phosphate synthase 1 (210 aa).

It belongs to the HPS/KGPDC family. HPS subfamily.

The catalysed reaction is D-ribulose 5-phosphate + formaldehyde = D-arabino-hex-3-ulose 6-phosphate. Its pathway is one-carbon metabolism; formaldehyde assimilation via RuMP pathway; D-fructose 6-phosphate from D-ribulose 5-phosphate and formaldehyde: step 1/2. In terms of biological role, catalyzes the condensation of ribulose 5-phosphate with formaldehyde to form 3-hexulose 6-phosphate. The sequence is that of 3-hexulose-6-phosphate synthase 1 from Staphylococcus saprophyticus subsp. saprophyticus (strain ATCC 15305 / DSM 20229 / NCIMB 8711 / NCTC 7292 / S-41).